The sequence spans 359 residues: 4-hydroxyproline 2-epimerase (359 aa).

The active-site Proton acceptor is cysteine 126. Residues 127–128 (GH), histidine 248, and aspartate 274 each bind substrate. The Proton donor role is filled by cysteine 278. 279–280 (GT) is a binding site for substrate.

It belongs to the proline racemase family.

The enzyme catalyses trans-4-hydroxy-L-proline = cis-4-hydroxy-D-proline. In terms of biological role, catalyzes the epimerization of trans-4-hydroxy-L-proline (t4LHyp) to cis-4-hydroxy-D-proline (c4DHyp). Is likely involved in a degradation pathway that converts t4LHyp to alpha-ketoglutarate. Displays no proline racemase activity. The sequence is that of 4-hydroxyproline 2-epimerase from Planctopirus limnophila (strain ATCC 43296 / DSM 3776 / IFAM 1008 / Mu 290) (Planctomyces limnophilus).